The sequence spans 199 residues: Holliday junction branch migration complex subunit RuvA (199 aa).

The segment at 1-64 (MIALLTGKLA…EDAINLYGFR (64 aa)) is domain I. The domain II stretch occupies residues 65–143 (TQQEKELFQL…KLGLAQPQAG (79 aa)). Positions 144-148 (GTTAP) are flexible linker. A domain III region spans residues 149–199 (AKQEIRDDVLSALINLGYKEAVVQKALAELKVTEDATVELVLKQALKILMK).

This sequence belongs to the RuvA family. Homotetramer. Forms an RuvA(8)-RuvB(12)-Holliday junction (HJ) complex. HJ DNA is sandwiched between 2 RuvA tetramers; dsDNA enters through RuvA and exits via RuvB. An RuvB hexamer assembles on each DNA strand where it exits the tetramer. Each RuvB hexamer is contacted by two RuvA subunits (via domain III) on 2 adjacent RuvB subunits; this complex drives branch migration. In the full resolvosome a probable DNA-RuvA(4)-RuvB(12)-RuvC(2) complex forms which resolves the HJ.

The protein resides in the cytoplasm. The RuvA-RuvB-RuvC complex processes Holliday junction (HJ) DNA during genetic recombination and DNA repair, while the RuvA-RuvB complex plays an important role in the rescue of blocked DNA replication forks via replication fork reversal (RFR). RuvA specifically binds to HJ cruciform DNA, conferring on it an open structure. The RuvB hexamer acts as an ATP-dependent pump, pulling dsDNA into and through the RuvAB complex. HJ branch migration allows RuvC to scan DNA until it finds its consensus sequence, where it cleaves and resolves the cruciform DNA. The sequence is that of Holliday junction branch migration complex subunit RuvA from Citrifermentans bemidjiense (strain ATCC BAA-1014 / DSM 16622 / JCM 12645 / Bem) (Geobacter bemidjiensis).